The sequence spans 104 residues: QPDFQRCPSLRCCQQLRQAVQLTHQQQGQVGPQQVRQQFQTHQRIPAICNLQPMRQAVQLAHQQQQGQVGPQQVRCCQQLRQAVQSQAAAAGQVGPQQVGHMYR.

In terms of assembly, oligomer in an unreduced state. Post-translationally, glycosylated.

Its function is as follows. Chitin-binding protein. Has antifungal activity against C.krusei, C.albicans, C.tropicalis and C.parapsilosis. Inhibits C.albicans by increasing cell membrane permeability and production of reactive oxygen species. Has no hemagglutinating activity. The polypeptide is Chitin-binding protein 2 (Moringa oleifera (Horseradish tree)).